Here is a 147-residue protein sequence, read N- to C-terminus: 16 kDa phloem protein 2 (147 aa).

The region spanning 1-103 (MPHGTLEVVL…FVEGSIPPTA (103 aa)) is the C2 domain. The Ca(2+) site is built by D20, D26, D73, D75, and D81. Positions 126–147 (ENRSRGMDEESYGGWKNSEASY) are disordered.

It depends on Ca(2+) as a cofactor.

In terms of biological role, binds to both sense and antisense RNA. Can also bind sheared DNA and dodecamer DNA with a low affinity. Interacts with mesophyll plasmodesmata to mediate its own cell-to-cell transport and potentiate RNA trafficking. May play a role in plant defense signaling. The polypeptide is 16 kDa phloem protein 2 (Arabidopsis thaliana (Mouse-ear cress)).